A 587-amino-acid chain; its full sequence is Aspartate--tRNA ligase (587 aa).

Residue E174 coordinates L-aspartate. Residues 198–201 (QITK) are aspartate. Residue R220 participates in L-aspartate binding. Residues 220 to 222 (RDE) and Q229 each bind ATP. Residue H443 coordinates L-aspartate. An ATP-binding site is contributed by E477. R484 provides a ligand contact to L-aspartate. Residue 529–532 (GLDR) coordinates ATP.

This sequence belongs to the class-II aminoacyl-tRNA synthetase family. Type 1 subfamily. In terms of assembly, homodimer.

It localises to the cytoplasm. The catalysed reaction is tRNA(Asp) + L-aspartate + ATP = L-aspartyl-tRNA(Asp) + AMP + diphosphate. In terms of biological role, catalyzes the attachment of L-aspartate to tRNA(Asp) in a two-step reaction: L-aspartate is first activated by ATP to form Asp-AMP and then transferred to the acceptor end of tRNA(Asp). This chain is Aspartate--tRNA ligase, found in Streptococcus pneumoniae (strain ATCC 700669 / Spain 23F-1).